Here is a 118-residue protein sequence, read N- to C-terminus: Putative pterin-4-alpha-carbinolamine dehydratase (118 aa).

Belongs to the pterin-4-alpha-carbinolamine dehydratase family.

It carries out the reaction (4aS,6R)-4a-hydroxy-L-erythro-5,6,7,8-tetrahydrobiopterin = (6R)-L-erythro-6,7-dihydrobiopterin + H2O. The chain is Putative pterin-4-alpha-carbinolamine dehydratase from Azotobacter vinelandii (strain DJ / ATCC BAA-1303).